A 390-amino-acid chain; its full sequence is Protein snail (390 aa).

The tract at residues 1–20 is SNAG domain; it reads MAANYKSCPLKKRPIVFVEE. Disordered regions lie at residues 29–65 and 162–191; these read ALTK…PKRD and QSVY…DLSV. Composition is skewed to polar residues over residues 32 to 43 and 162 to 172; these read KDSQFAQDQPQD and QSVYSYQQMTP. 5 consecutive C2H2-type zinc fingers follow at residues 245–267, 280–302, 306–328, 334–356, and 362–385; these read FKCD…RQFH, HSCE…IRTH, CKCP…IRTH, FQCP…QQTH, and YACQ…SSNC.

Belongs to the snail C2H2-type zinc-finger protein family.

The protein localises to the nucleus. Essential for the correct specification of ventral-dorsal patterns. The polypeptide is Protein snail (sna) (Drosophila melanogaster (Fruit fly)).